Consider the following 261-residue polypeptide: Taurine import ATP-binding protein TauB (261 aa).

The 230-residue stretch at 4–233 folds into the ABC transporter domain; that stretch reads LQLERIGAQY…RYAAGESARA (230 aa). 38–45 contacts ATP; sequence GPSGSGKT.

This sequence belongs to the ABC transporter superfamily. Taurine importer (TC 3.A.1.17.1) family. As to quaternary structure, the complex is composed of two ATP-binding proteins (TauB), two transmembrane proteins (TauC) and a solute-binding protein (TauA).

It localises to the cell inner membrane. It carries out the reaction taurine(out) + ATP + H2O = taurine(in) + ADP + phosphate + H(+). Its function is as follows. Part of the ABC transporter complex TauABC involved in taurine import. Responsible for energy coupling to the transport system. This is Taurine import ATP-binding protein TauB from Pseudomonas savastanoi pv. phaseolicola (strain 1448A / Race 6) (Pseudomonas syringae pv. phaseolicola (strain 1448A / Race 6)).